Reading from the N-terminus, the 87-residue chain is Retinal rod rhodopsin-sensitive cGMP 3',5'-cyclic phosphodiesterase subunit gamma (87 aa).

Met1 carries the post-translational modification N-acetylmethionine. The segment covering 1-12 has biased composition (basic and acidic residues); the sequence is MNLEPPKAEIRS. Positions 1 to 55 are disordered; the sequence is MNLEPPKAEIRSATRVIGGPVTPRKGPPKFKQRQTRQFKSKPPKKGVQGFGDDIP. The segment covering 26-44 has biased composition (basic residues); it reads GPPKFKQRQTRQFKSKPPK.

The protein belongs to the rod/cone cGMP-PDE gamma subunit family. Oligomer composed of two catalytic chains (alpha and beta), an inhibitory chain (gamma) and the delta chain.

The catalysed reaction is 3',5'-cyclic GMP + H2O = GMP + H(+). Participates in processes of transmission and amplification of the visual signal. cGMP-PDEs are the effector molecules in G-protein-mediated phototransduction in vertebrate rods and cones. This chain is Retinal rod rhodopsin-sensitive cGMP 3',5'-cyclic phosphodiesterase subunit gamma (PDE6G), found in Canis lupus familiaris (Dog).